A 302-amino-acid chain; its full sequence is 1D-myo-inositol 2-acetamido-2-deoxy-alpha-D-glucopyranoside deacetylase (302 aa).

Zn(2+)-binding residues include H13, D16, and H155.

The protein belongs to the MshB deacetylase family. Zn(2+) is required as a cofactor.

The catalysed reaction is 1D-myo-inositol 2-acetamido-2-deoxy-alpha-D-glucopyranoside + H2O = 1D-myo-inositol 2-amino-2-deoxy-alpha-D-glucopyranoside + acetate. In terms of biological role, catalyzes the deacetylation of 1D-myo-inositol 2-acetamido-2-deoxy-alpha-D-glucopyranoside (GlcNAc-Ins) in the mycothiol biosynthesis pathway. In Nocardioides sp. (strain ATCC BAA-499 / JS614), this protein is 1D-myo-inositol 2-acetamido-2-deoxy-alpha-D-glucopyranoside deacetylase.